Consider the following 190-residue polypeptide: MIRFEIHGDNLTITDAIRNYIEEKIGKLERYFNDVPNAVAHVKVKTYSNSATKIEVTIPLKNVTLRAEERNDDLYAGIDLINNKLERQVRKYKTRINRKSRDRGDQEVFVAELQEMQETQVDNDAYDDNEIEIIRSKEFSLKPMDSEEAVLQMNLLGHDFFVFIDRETDGTSIVYRRKDGKYGLIQTSEQ.

Belongs to the HPF/YfiA ribosome-associated protein family. Long HPF subfamily. In terms of assembly, interacts with 100S ribosomes.

The protein resides in the cytoplasm. In terms of biological role, required for dimerization of active 70S ribosomes into 100S ribosomes in stationary phase; 100S ribosomes are translationally inactive and sometimes present during exponential growth. The protein is Ribosome hibernation promotion factor of Staphylococcus aureus (strain COL).